The chain runs to 638 residues: Sodium- and chloride-dependent glycine transporter 1 (638 aa).

Residues 1–30 (MAVAHGPVATSSPEQNGAVPSEATKKDQNL) are disordered. The Cytoplasmic portion of the chain corresponds to 1–40 (MAVAHGPVATSSPEQNGAVPSEATKKDQNLTRGNWGNQIE). A run of 3 helical transmembrane segments spans residues 41–61 (FVLTSVGYAVGLGNVWRFPYL), 68–88 (GAFMFPYFIMLVFCGIPLFFM), and 120–140 (VSTYIGIYYNVVICIAFYYFF). Over 141 to 217 (SSMTHVLPWA…LSDDIGDFGE (77 aa)) the chain is Extracellular. 4 N-linked (GlcNAc...) asparagine glycosylation sites follow: Asn169, Asn172, Asn182, and Asn188. The next 9 helical transmembrane spans lie at 218–238 (VRLPLLGCLGVSWVVVFLCLI), 247–267 (VVYFTATFPYVVLTILFVRGV), 292–312 (VWGDAASQIFYSLGCAWGGLI), 339–359 (SVYAGFVIFSILGFMANHLGV), 382–402 (LLPISPLWSLLFFFMLILLGL), 438–458 (VAGFLLGIPLTSQAGIYWLLL), 462–482 (YAASFSLVVISCIMCVSIMYI), 502–522 (LFFQICWRFVSPTIIFFILIF), and 542–562 (VAIGFLMALSSVICIPLYALF). At 563–638 (QLCRTDGDTL…GSSRLQDSRI (76 aa)) the chain is on the cytoplasmic side. At Thr603 the chain carries Phosphothreonine. Residues Ser605 and Ser630 each carry the phosphoserine modification. The tract at residues 627–638 (SNGSSRLQDSRI) is essential for interaction with EXOC1.

Belongs to the sodium:neurotransmitter symporter (SNF) (TC 2.A.22) family. SLC6A9 subfamily. Interacts with EXOC1; interaction increases the transporter capacity of SLC6A9 probably by promoting its insertion into the cell membrane. Interacts with EXOC3 and EXOC4. In terms of tissue distribution, found only in the white matter of the CNS. As to expression, found in the gray matter of CNS as well as in macrophages and mast cells in peripheral tissues.

Its subcellular location is the cell membrane. It catalyses the reaction glycine(out) + chloride(out) + 2 Na(+)(out) = glycine(in) + chloride(in) + 2 Na(+)(in). Its activity is regulated as follows. Inhibited by sarcosine. Its function is as follows. Sodium- and chloride-dependent glycine transporter. Essential for regulating glycine concentrations at inhibitory glycinergic synapses. This chain is Sodium- and chloride-dependent glycine transporter 1 (Slc6a9), found in Rattus norvegicus (Rat).